We begin with the raw amino-acid sequence, 949 residues long: Translation initiation factor IF-2 (949 aa).

3 disordered regions span residues 61–122, 139–159, and 171–284; these read IQAN…PIIK, VENTPKAVSHSQIEKAKQKLQ, and LTQS…NKSH. Composition is skewed to basic and acidic residues over residues 112-122 and 150-159; these read KKKEAPAPIIK and QIEKAKQKLQ. The span at 174–190 shows a compositional bias: low complexity; the sequence is SNTNTTNNANSASNVSN. The span at 191–208 shows a compositional bias: basic and acidic residues; sequence AKKEISEVKKQEQEIKRH. A compositionally biased stretch (basic residues) spans 209-220; that stretch reads ENIKRRTGFRVI. The segment covering 249–264 has biased composition (basic and acidic residues); the sequence is EDIKKEWQEKDKQETK. Residues 448–617 enclose the tr-type G domain; that stretch reads ERPPVVTIMG…LIQADIMELK (170 aa). The G1 stretch occupies residues 457 to 464; the sequence is GHVDHGKT. GTP is bound at residue 457–464; sequence GHVDHGKT. The segment at 482 to 486 is G2; that stretch reads GITQH. The tract at residues 503–506 is G3; sequence DTPG. GTP contacts are provided by residues 503–507 and 557–560; these read DTPGH and NKMD. The interval 557-560 is G4; that stretch reads NKMD. Residues 593–595 form a G5 region; it reads SAK.

The protein belongs to the TRAFAC class translation factor GTPase superfamily. Classic translation factor GTPase family. IF-2 subfamily.

The protein localises to the cytoplasm. Functionally, one of the essential components for the initiation of protein synthesis. Protects formylmethionyl-tRNA from spontaneous hydrolysis and promotes its binding to the 30S ribosomal subunits. Also involved in the hydrolysis of GTP during the formation of the 70S ribosomal complex. This is Translation initiation factor IF-2 (infB) from Helicobacter pylori (strain J99 / ATCC 700824) (Campylobacter pylori J99).